The following is a 424-amino-acid chain: UDP-sugar transporter protein SLC35A5 (424 aa).

Over 1-8 (MEKQCCSH) the chain is Cytoplasmic. The chain crosses the membrane as a helical span at residues 9–29 (PVICSLSTMYTFLLGAIFIAL). Residues 30–53 (SSSRILLVKYSANEENKYDYLPTT) are Lumenal-facing. Residues 54–74 (ANVCSELVKLVFCVLVSFCVI) form a helical membrane-spanning segment. At 75 to 93 (KKDHQSRNLKYASWKEFSN) the chain is on the cytoplasmic side. A helical membrane pass occupies residues 94-116 (FMKWSIPAFLYFLDNLIVFYVLS). Topologically, residues 117–119 (YLQ) are lumenal. Residues 120–142 (PAMAVIFSNFSIITTALLFRIVL) form a helical membrane-spanning segment. The Cytoplasmic segment spans residues 143-147 (KRRLN). A helical membrane pass occupies residues 148–168 (WIQWASLLILFLSIVALTAGT). The Lumenal portion of the chain corresponds to 169-228 (KTLQHNLAGHGFHHDAFFSPSNSCLLFRSECPRKDNCTAKEWTFPEAKWNTTARVFSHIR). N-linked (GlcNAc...) asparagine glycosylation occurs at Asn-204. A helical transmembrane segment spans residues 229–249 (LGMGHVLIIVQCFISSMANIY). At 250 to 263 (NEKILKEGNQLAES) the chain is on the cytoplasmic side. The helical transmembrane segment at 264-284 (IFIQNSKLYFFGILFNGLTLG) threads the bilayer. Residues 285-303 (LQRSNRDQIKNCGFFYGHN) are Lumenal-facing. A helical membrane pass occupies residues 304–324 (AFSVALIFVTAFQGLSVAFIL). The Cytoplasmic segment spans residues 325–330 (KFLDNM). Residues 331–351 (FHVLMAQVTTVIITTVSVLVF) traverse the membrane as a helical segment. The Lumenal segment spans residues 352–354 (DFR). The chain crosses the membrane as a helical span at residues 355-375 (PSLEFFLEAPSVLLSIFIYNA). The Cytoplasmic segment spans residues 376 to 424 (SKPQGPEYAPRQERIRDLSGNLWERSSGDGEELERLTKPKSDESDEDTF). A phosphoserine mark is found at Ser-394, Ser-416, and Ser-419. Positions 395-424 (GNLWERSSGDGEELERLTKPKSDESDEDTF) are disordered. Positions 408–417 (LERLTKPKSD) are enriched in basic and acidic residues.

The protein belongs to the nucleotide-sugar transporter family. SLC35A subfamily. As to quaternary structure, probably forms homooligomers and heterooligomers with SLC35A1, SLC35A2, SLC35A3 and SLC35A4.

It localises to the golgi apparatus membrane. It catalyses the reaction UMP(out) + UDP-alpha-D-glucuronate(in) = UMP(in) + UDP-alpha-D-glucuronate(out). The enzyme catalyses UMP(out) + UDP-N-acetyl-alpha-D-glucosamine(in) = UMP(in) + UDP-N-acetyl-alpha-D-glucosamine(out). The catalysed reaction is UDP-N-acetyl-alpha-D-galactosamine(in) + UMP(out) = UDP-N-acetyl-alpha-D-galactosamine(out) + UMP(in). Probable UDP-sugar:UMP transmembrane antiporter involved in UDP-alpha-D-glucuronate/UDP-GlcA, UDP-GlcNAc/UDP-N-acetyl-alpha-D-glucosamine and UDP-N-acetyl-alpha-D-galactosamine/UDP-GalNAc transport from the cytosol to the lumen of the Golgi. In Pongo abelii (Sumatran orangutan), this protein is UDP-sugar transporter protein SLC35A5.